An 835-amino-acid chain; its full sequence is Serine/threonine-protein kinase TNNI3K (835 aa).

A coiled-coil region spans residues 21 to 51; the sequence is SESYVITIERLEDDLQIKEKELTELRNIFGS. 10 ANK repeats span residues 66–96, 100–129, 133–162, 166–195, 199–228, 234–263, 269–298, 304–335, 339–368, and 381–410; these read NGLS…RPSR, NGFT…DIQQ, GGLT…NVNI, VFFT…DVNV, VGDR…KADV, EDHV…EVQP, YGDT…TESL, FSET…NINH, DGHT…DMNL, and DEQT…PQDE. Residues 463 to 723 enclose the Protein kinase domain; that stretch reads IEFHEIIGSG…EVVMKLEECL (261 aa). ATP contacts are provided by residues 469–477 and Lys-490; that span reads IGSGSFGKV. The Proton acceptor role is filled by Asp-588. A compositionally biased stretch (low complexity) spans 732–746; it reads ASSNSSGSLSPSSSS. The interval 732–751 is disordered; the sequence is ASSNSSGSLSPSSSSDCLVN.

It belongs to the protein kinase superfamily. TKL Ser/Thr protein kinase family. MAP kinase kinase kinase subfamily. Interacts with TNNI3, ACTC1, ACTA1, MYBPC3, AIP, FABP3 and HADHB. It depends on Mg(2+) as a cofactor. Autophosphorylated. As to expression, highly expressed in both adult and fetal heart.

The protein resides in the nucleus. The protein localises to the cytoplasm. The catalysed reaction is L-seryl-[protein] + ATP = O-phospho-L-seryl-[protein] + ADP + H(+). It catalyses the reaction L-threonyl-[protein] + ATP = O-phospho-L-threonyl-[protein] + ADP + H(+). Functionally, may play a role in cardiac physiology. This Homo sapiens (Human) protein is Serine/threonine-protein kinase TNNI3K.